A 564-amino-acid chain; its full sequence is Probable cysteine--tRNA ligase, mitochondrial (564 aa).

Cys78 is a binding site for Zn(2+). Gly79 serves as a coordination point for L-cysteine. The 'HIGH' region motif lies at 80 to 90 (PTVYDHAHLGH). Thr119 contacts L-cysteine. A 'KIIK' region motif is present at residues 124–127 (KIIK). Cys257, His282, and Glu286 together coordinate Zn(2+). L-cysteine is bound at residue His282. Residues 317–321 (KMSKS) carry the 'KMSKS' region motif. Lys320 serves as a coordination point for ATP.

Belongs to the class-I aminoacyl-tRNA synthetase family. The cofactor is Zn(2+).

The protein resides in the mitochondrion. It catalyses the reaction tRNA(Cys) + L-cysteine + ATP = L-cysteinyl-tRNA(Cys) + AMP + diphosphate. The enzyme catalyses 2 L-cysteine = S-sulfanyl-L-cysteine + L-alanine. The catalysed reaction is S-sulfanyl-L-cysteine + L-cysteine = S-disulfanyl-L-cysteine + L-alanine. It carries out the reaction S-sulfanyl-L-cysteine + tRNA(Cys) + ATP = (S)-sulfanyl-L-cysteinyl-tRNA(Cys) + AMP + diphosphate. It catalyses the reaction S-disulfanyl-L-cysteine + tRNA(Cys) + ATP = (S)-disulfanyl-L-cysteinyl-tRNA(Cys) + AMP + diphosphate. Mitochondrial cysteine-specific aminoacyl-tRNA synthetase that catalyzes the ATP-dependent ligation of cysteine to tRNA(Cys). Its function is as follows. In addition to its role as an aminoacyl-tRNA synthetase, has also cysteine persulfide synthase activity. Produces reactive persulfide species such as cysteine persulfide (CysSSH) from substrate cysteine and mediate direct incorporation of CysSSH into proteins during translations, resulting in protein persulfides and polysulfides. CysSSHs behave as potent antioxidants and cellular protectants. This Homo sapiens (Human) protein is Probable cysteine--tRNA ligase, mitochondrial.